A 37-amino-acid polypeptide reads, in one-letter code: Esculentin-2HSa (37 aa).

An intrachain disulfide couples cysteine 31 to cysteine 37.

Expressed by the skin glands.

It is found in the secreted. Functionally, has antibacterial activity against the Gram-positive bacterium S.aureus ATCC 25923 (MIC=32 uM) and the Gram-negative bacterium E.coli ATCC 25726 (MIC=16 uM). This Odorrana hosii (Hose's rock frog) protein is Esculentin-2HSa.